Reading from the N-terminus, the 310-residue chain is UDP-N-acetylenolpyruvoylglucosamine reductase (310 aa).

The 165-residue stretch at 35–199 (VGGPAQALFT…TSARFRGTPA (165 aa)) folds into the FAD-binding PCMH-type domain. The active site involves R179. The Proton donor role is filled by S228. Residue E298 is part of the active site.

Belongs to the MurB family. FAD is required as a cofactor.

The protein resides in the cytoplasm. It catalyses the reaction UDP-N-acetyl-alpha-D-muramate + NADP(+) = UDP-N-acetyl-3-O-(1-carboxyvinyl)-alpha-D-glucosamine + NADPH + H(+). It functions in the pathway cell wall biogenesis; peptidoglycan biosynthesis. Cell wall formation. The polypeptide is UDP-N-acetylenolpyruvoylglucosamine reductase (Rhodopseudomonas palustris (strain BisB5)).